A 558-amino-acid polypeptide reads, in one-letter code: EF-hand and coiled-coil domain-containing protein 1 (558 aa).

An EF-hand domain is found at 43–78 (GLDQYLQEVFHHLDCRGAGRLPRADFRALCAVLGLN). A compositionally biased stretch (basic residues) spans 161 to 170 (LRRPRRRRRP). Disordered stretches follow at residues 161-183 (LRRP…YGER) and 304-395 (RSEG…QPSG). 2 coiled-coil regions span residues 179–304 (AYGE…RGYR) and 453–495 (VEAE…LNIS).

The protein is EF-hand and coiled-coil domain-containing protein 1 (Efcc1) of Mus musculus (Mouse).